Consider the following 157-residue polypeptide: Ribosomal RNA large subunit methyltransferase H (157 aa).

S-adenosyl-L-methionine is bound by residues Leu73, Gly105, and 124 to 129; that span reads LSKMTF.

The protein belongs to the RNA methyltransferase RlmH family. In terms of assembly, homodimer.

It is found in the cytoplasm. The catalysed reaction is pseudouridine(1915) in 23S rRNA + S-adenosyl-L-methionine = N(3)-methylpseudouridine(1915) in 23S rRNA + S-adenosyl-L-homocysteine + H(+). Its function is as follows. Specifically methylates the pseudouridine at position 1915 (m3Psi1915) in 23S rRNA. The protein is Ribosomal RNA large subunit methyltransferase H of Christiangramia forsetii (strain DSM 17595 / CGMCC 1.15422 / KT0803) (Gramella forsetii).